The primary structure comprises 497 residues: Acetyl-coenzyme A carboxylase carboxyl transferase subunit beta (497 aa).

Residues 217–489 (LWLQCDNCYG…NQNSNQYSQY (273 aa)) form the CoA carboxyltransferase N-terminal domain. 4 residues coordinate Zn(2+): C221, C224, C240, and C243. Residues 221-243 (CDNCYGLNYKKVLKSKMTICEQC) form a C4-type zinc finger.

It belongs to the AccD/PCCB family. In terms of assembly, acetyl-CoA carboxylase is a heterohexamer composed of biotin carboxyl carrier protein, biotin carboxylase and 2 subunits each of ACCase subunit alpha and ACCase plastid-coded subunit beta (accD). The cofactor is Zn(2+).

The protein resides in the plastid. The enzyme catalyses N(6)-carboxybiotinyl-L-lysyl-[protein] + acetyl-CoA = N(6)-biotinyl-L-lysyl-[protein] + malonyl-CoA. It participates in lipid metabolism; malonyl-CoA biosynthesis; malonyl-CoA from acetyl-CoA: step 1/1. Functionally, component of the acetyl coenzyme A carboxylase (ACC) complex. Biotin carboxylase (BC) catalyzes the carboxylation of biotin on its carrier protein (BCCP) and then the CO(2) group is transferred by the transcarboxylase to acetyl-CoA to form malonyl-CoA. This chain is Acetyl-coenzyme A carboxylase carboxyl transferase subunit beta, found in Cuscuta reflexa (Southern Asian dodder).